The primary structure comprises 401 residues: (1R,4R,5S)-(-)-guaia-6,10(14)-diene synthase (401 aa).

A disordered region spans residues 1-21 (MVKFDSGSESEMTNGDDLHIN). Residues D134 and E139 each contribute to the Mg(2+) site. Residues 134–138 (DDQFD) carry the DDXXD motif motif. R242 is a binding site for substrate. Residues N288 and S292 each coordinate Mg(2+). Substrate is bound at residue K295. D296 serves as a coordination point for Mg(2+). Substrate is bound at residue 375–376 (RY).

It belongs to the terpene synthase family. Mg(2+) serves as cofactor.

The enzyme catalyses (2E,6E)-farnesyl diphosphate = (1R,4R,5S)-(-)-guaia-6,10(14)-diene + diphosphate. The protein operates within secondary metabolite biosynthesis; terpenoid biosynthesis. In terms of biological role, catalyzes the conversion of (2E,6E)-farnesyl diphosphate (FPP) to yield the bicyclic sesquiterpene guaia-6,10(14)-diene via a 1,10-cyclization, which requires the abstraction of the pyrophosphate from FPP to yield the (E,E)-germacradienyl cation. The only accepted substrate is farnesyl diphosphate (FPP). This is (1R,4R,5S)-(-)-guaia-6,10(14)-diene synthase from Fusarium proliferatum (strain ET1) (Orchid endophyte fungus).